Reading from the N-terminus, the 688-residue chain is Elongation factor G (688 aa).

Residues 8 to 282 (ERTRNIGIMA…AVLDYLPAPT (275 aa)) form the tr-type G domain. Residues 17-24 (AHIDAGKT), 81-85 (DTPGH), and 135-138 (NKMD) contribute to the GTP site.

Belongs to the TRAFAC class translation factor GTPase superfamily. Classic translation factor GTPase family. EF-G/EF-2 subfamily.

It is found in the cytoplasm. Its function is as follows. Catalyzes the GTP-dependent ribosomal translocation step during translation elongation. During this step, the ribosome changes from the pre-translocational (PRE) to the post-translocational (POST) state as the newly formed A-site-bound peptidyl-tRNA and P-site-bound deacylated tRNA move to the P and E sites, respectively. Catalyzes the coordinated movement of the two tRNA molecules, the mRNA and conformational changes in the ribosome. The polypeptide is Elongation factor G (Clostridioides difficile (strain 630) (Peptoclostridium difficile)).